The chain runs to 291 residues: 4-hydroxy-tetrahydrodipicolinate synthase (291 aa).

Threonine 44 serves as a coordination point for pyruvate. Residue tyrosine 132 is the Proton donor/acceptor of the active site. Catalysis depends on lysine 160, which acts as the Schiff-base intermediate with substrate. Pyruvate is bound at residue isoleucine 202.

This sequence belongs to the DapA family. In terms of assembly, homotetramer; dimer of dimers.

It is found in the cytoplasm. It carries out the reaction L-aspartate 4-semialdehyde + pyruvate = (2S,4S)-4-hydroxy-2,3,4,5-tetrahydrodipicolinate + H2O + H(+). It participates in amino-acid biosynthesis; L-lysine biosynthesis via DAP pathway; (S)-tetrahydrodipicolinate from L-aspartate: step 3/4. Catalyzes the condensation of (S)-aspartate-beta-semialdehyde [(S)-ASA] and pyruvate to 4-hydroxy-tetrahydrodipicolinate (HTPA). This chain is 4-hydroxy-tetrahydrodipicolinate synthase, found in Sphingopyxis alaskensis (strain DSM 13593 / LMG 18877 / RB2256) (Sphingomonas alaskensis).